The following is a 685-amino-acid chain: Linoleate 9/13-lipoxygenase (685 aa).

The N-terminal stretch at 1-19 (MKRRSVLLSGVALSGTALA) is a signal peptide. The 564-residue stretch at 122–685 (ASLPASAAAQ…PSRIPASTNI (564 aa)) folds into the Lipoxygenase domain. Residues H377, H382, H555, N559, and I685 each contribute to the Fe cation site.

The protein belongs to the lipoxygenase family. Monomer. The cofactor is Fe cation.

It is found in the periplasm. The enzyme catalyses (9Z,12Z)-octadecadienoate + O2 = (9S)-hydroperoxy-(10E,12Z)-octadecadienoate. The catalysed reaction is (9Z)-octadecenoate + O2 = (8E,10S)-10-hydroperoxy-octadeca-8-enoate. It carries out the reaction (9Z,12Z)-octadecadienoate + O2 = (8E,10S,12Z)-10-hydroperoxyoctadeca-8,12-dienoate. It catalyses the reaction (9Z,12Z,15Z)-octadecatrienoate + O2 = (8E,10S,12Z,15Z)-10-hydroperoxyoctadeca-8,12,15-trienoate. The enzyme catalyses (9Z,12Z)-octadecadienoate + O2 = (13S)-hydroperoxy-(9Z,11E)-octadecadienoate. The catalysed reaction is (9Z,12Z,15Z)-octadecatrienoate + O2 = (13S)-hydroperoxy-(9Z,11E,15Z)-octadecatrienoate. With respect to regulation, inhibited by Ba(2+), Zn(2+) and Fe(3+). In presence of oxygen, converts linoleate into (9S)-hydroperoxy-10,12-octadecenoate (9HPOD), which spontaneously decomposes to the corresponding 9-hydroxy-10,12-octadecenoate (9HOD), and into 13-hydroperoxy-9,11-octadecenoate (13HPOD) which spontaneously decomposes to the corresponding 13-hydroxy-9,11-octadecenoate (13HOD). Also active on linolenate. To a lesser extent, is also able to convert oleate into (10S)-hydroperoxy-8E-octadecenoate, which spontaneously decomposes to the corresponding 10-hydroxy-8E-octadecenoate. Is almost not active on arachidonate. This chain is Linoleate 9/13-lipoxygenase (lox), found in Pseudomonas aeruginosa.